Reading from the N-terminus, the 489-residue chain is Glucose-6-phosphate 1-dehydrogenase (489 aa).

Residues 15–22 (GATGDLAK), Arg49, 86–87 (DV), and Lys149 each bind NADP(+). Substrate is bound by residues His179, Lys183, Glu217, and Asp236. The Proton acceptor role is filled by His241. 2 residues coordinate substrate: Lys341 and Lys346.

It belongs to the glucose-6-phosphate dehydrogenase family.

It catalyses the reaction D-glucose 6-phosphate + NADP(+) = 6-phospho-D-glucono-1,5-lactone + NADPH + H(+). It functions in the pathway carbohydrate degradation; pentose phosphate pathway; D-ribulose 5-phosphate from D-glucose 6-phosphate (oxidative stage): step 1/3. Its function is as follows. Catalyzes the oxidation of glucose 6-phosphate to 6-phosphogluconolactone. The protein is Glucose-6-phosphate 1-dehydrogenase of Bacillus subtilis (strain 168).